We begin with the raw amino-acid sequence, 414 residues long: Poly(3-hydroxyalkanoate) depolymerase C (414 aa).

The N-terminal stretch at 1 to 37 (MLAKQIKKANSRSTLLRKSLLFAAPIILAVSSSSVYA) is a signal peptide. The active-site Charge relay system is the serine 154.

This sequence belongs to the AB hydrolase superfamily. Lipase family.

The protein localises to the secreted. Its function is as follows. Specific for poly(hydroxyalkanoic acid) consisting of monomers of four or five carbon atoms and for P-nitrophenylbutyrate as substrates. The sequence is that of Poly(3-hydroxyalkanoate) depolymerase C (phaZ1) from Paucimonas lemoignei (Pseudomonas lemoignei).